Here is a 308-residue protein sequence, read N- to C-terminus: Serpentine receptor class V-1 (308 aa).

Helical transmembrane passes span 15–35 (VSTAISLVCLPINILFVYILF), 46–68 (PFFRLCIHLSIADILMELFSTFF), 88–108 (VVPIAGMQYLGHAQAFGIIFI), 135–155 (LLLIQWITPLFFMAPLFSTDF), 184–204 (AMVDGILINLIVLLLYGAIFI), 222–242 (LALSAFIIFICYLALGVCSLL), and 256–276 (TMWFVVNDVLCNSSALVLLAL).

Belongs to the nematode receptor-like protein srv family.

It localises to the membrane. This is Serpentine receptor class V-1 (srv-1) from Caenorhabditis elegans.